A 417-amino-acid polypeptide reads, in one-letter code: NADH-quinone oxidoreductase subunit D (417 aa).

It belongs to the complex I 49 kDa subunit family. As to quaternary structure, NDH-1 is composed of 14 different subunits. Subunits NuoB, C, D, E, F, and G constitute the peripheral sector of the complex.

The protein resides in the cell inner membrane. It catalyses the reaction a quinone + NADH + 5 H(+)(in) = a quinol + NAD(+) + 4 H(+)(out). Functionally, NDH-1 shuttles electrons from NADH, via FMN and iron-sulfur (Fe-S) centers, to quinones in the respiratory chain. The immediate electron acceptor for the enzyme in this species is believed to be ubiquinone. Couples the redox reaction to proton translocation (for every two electrons transferred, four hydrogen ions are translocated across the cytoplasmic membrane), and thus conserves the redox energy in a proton gradient. This Albidiferax ferrireducens (strain ATCC BAA-621 / DSM 15236 / T118) (Rhodoferax ferrireducens) protein is NADH-quinone oxidoreductase subunit D.